Consider the following 825-residue polypeptide: Endoglucanase C (825 aa).

The N-terminal stretch at 1–28 (MRNKLRRLLAIMMAVLLITSLFAPMVSA) is a signal peptide. The active-site Proton donor is E219. Catalysis depends on E335, which acts as the Nucleophile. Residues 607–621 (DRESVPEPVEHDTKG) show a composition bias toward basic and acidic residues. Residues 607-635 (DRESVPEPVEHDTKGDSALPSDFEDGTRQ) form a disordered region.

The protein belongs to the glycosyl hydrolase 5 (cellulase A) family.

It catalyses the reaction Endohydrolysis of (1-&gt;4)-beta-D-glucosidic linkages in cellulose, lichenin and cereal beta-D-glucans.. The protein is Endoglucanase C (celC) of Evansella cellulosilytica (strain ATCC 21833 / DSM 2522 / FERM P-1141 / JCM 9156 / N-4) (Bacillus cellulosilyticus).